The chain runs to 129 residues: Small ribosomal subunit protein uS11 (129 aa).

Belongs to the universal ribosomal protein uS11 family. As to quaternary structure, part of the 30S ribosomal subunit. Interacts with proteins S7 and S18. Binds to IF-3.

Its function is as follows. Located on the platform of the 30S subunit, it bridges several disparate RNA helices of the 16S rRNA. Forms part of the Shine-Dalgarno cleft in the 70S ribosome. The sequence is that of Small ribosomal subunit protein uS11 from Paracoccus denitrificans (strain Pd 1222).